Reading from the N-terminus, the 219-residue chain is Protein YNG1 (219 aa).

A PHD-type; degenerate zinc finger spans residues 155–204 (EVYCFCRNVSYGPMVACDNPACPFEWFHYGCVGLKQAPKGKWYCSKDCKE). Positions 158, 160, 171, 176, 182, 185, 198, and 202 each coordinate Zn(2+).

This sequence belongs to the ING family. Component of the NuA3 histone acetyltransferase (HAT) complex. The NuA3 HAT complex has 2 functionally distinct forms that participate in transcription. The NuA3a HAT complex is composed of at least NTO1, SAS3, TAF14, YNG1 and EAF6. The NuA3b HAT complex contains an additional subunit, PDP3. Interacts with H3K4me3 and to a lesser extent with H3K4me2.

Its subcellular location is the nucleus. In terms of biological role, histone-binding component of the NuA3a histone acetyltransferase complex. Targets the NuA3a HAT complex via histone H3K4me3 to facilitate transcription initiation at promoter regions. SAS3 then acetylates H3K14, leading to transcription initiation at a subset of genes. YNG1 is required for the HAT activity of NuA3 but not for its integrity. Mediates the interaction of SAS3 with nucleosomes. In Saccharomyces cerevisiae (strain ATCC 204508 / S288c) (Baker's yeast), this protein is Protein YNG1 (YNG1).